We begin with the raw amino-acid sequence, 373 residues long: Leucine aminopeptidase 1 (373 aa).

Positions 1–18 (MKLLSVLALSATATSVLG) are cleaved as a signal peptide. Positions 176 and 195 each coordinate Zn(2+). Residue Asn-196 is glycosylated (N-linked (GlcNAc...) asparagine). Positions 234 and 261 each coordinate Zn(2+). Asn-288 carries an N-linked (GlcNAc...) asparagine glycan. A disulfide bridge links Cys-310 with Cys-314. His-343 is a Zn(2+) binding site. A glycan (N-linked (GlcNAc...) asparagine) is linked at Asn-348.

It belongs to the peptidase M28 family. M28E subfamily. Monomer. It depends on Zn(2+) as a cofactor.

The protein resides in the secreted. With respect to regulation, activity is inhibited by EDTA, o-phenanthroline, bestatin and amastatin. Its function is as follows. Extracellular aminopeptidase which contributes to pathogenicity. This is Leucine aminopeptidase 1 (LAP1) from Trichophyton rubrum (Athlete's foot fungus).